The primary structure comprises 496 residues: Glycine receptor subunit beta (496 aa).

The N-terminal stretch at 1–22 (MKFSLAISFFILMSLLFEDACA) is a signal peptide. The Extracellular segment spans residues 23–268 (KEKSSKKGKG…IFTLRRQVGF (246 aa)). The segment at 32 to 53 (GKKKQYLCPSQQSPEDLARVPP) is disordered. An N-linked (GlcNAc...) asparagine glycan is attached at Asn-54. 2 residues coordinate glycine: Arg-108 and Ser-174. An intrachain disulfide couples Cys-183 to Cys-197. Asn-242 carries an N-linked (GlcNAc...) asparagine glycan. Cys-243 and Cys-255 are disulfide-bonded. Position 250 (Thr-250) interacts with glycine. The helical transmembrane segment at 269-289 (YMMGVYAPTLLIVVLSWLSFW) threads the bilayer. Residues 290–294 (INPDA) lie on the Cytoplasmic side of the membrane. A helical transmembrane segment spans residues 295-315 (SAARVPLGIFSVLSLASECTT). At 316 to 327 (LAAELPKVSYVK) the chain is on the extracellular side. The helical transmembrane segment at 328-349 (ALDVWLIACLLFGFASLVEYAV) threads the bilayer. Residues 350-471 (VQVMLNNPKR…KPVIPTAAKR (122 aa)) are Cytoplasmic-facing. A Phosphothreonine modification is found at Thr-391. A helical membrane pass occupies residues 472-495 (IDLYARALFPFCFLFFNVIYWSIY). A topological domain (extracellular) is located at residue Leu-496.

The protein belongs to the ligand-gated ion channel (TC 1.A.9) family. Glycine receptor (TC 1.A.9.3) subfamily. GLRB sub-subfamily. As to quaternary structure, forms heteropentamers with glycin receptor alpha subunits. Heteropentamers with GLRA1 can be composed of two GLRA1 and three GLRB subunits, or three GLRA1 and two GLRB subunits, or four GLRA1 subunits and one GLRB subunit. Forms heteropentamers with GLRA2. Functional GLRB-GLRA2 heteropentamers contain four GLRA2 subunits and one GLRB subunit, although alternative subunit composition cannot be excluded. Forms a heteropentamer with GLRA3. Interacts with GPHN. As to expression, detected in spinal cord, brain and brain stem, especially in the periolivary region, spinal nuclei, trigeminal nucleus, medulla oblongata, pons and midbrain. Detected in the inner plexiform layer of the retina (at protein level). High levels of expression in cortex, hippocampus, thalamus and cerebellum. Detected in spinal cord.

The protein localises to the postsynaptic cell membrane. Its subcellular location is the synapse. It localises to the cell projection. The protein resides in the dendrite. It is found in the cell membrane. The protein localises to the cytoplasm. The catalysed reaction is chloride(in) = chloride(out). With respect to regulation, channel opening is triggered by extracellular glycine. Heteropentameric channels composed of GLRB and GLRA1 are activated by lower glycine levels than homopentameric GLRA1. In terms of biological role, subunit of heteromeric glycine-gated chloride channels. Plays an important role in the down-regulation of neuronal excitability. Contributes to the generation of inhibitory postsynaptic currents. This is Glycine receptor subunit beta (Glrb) from Mus musculus (Mouse).